Reading from the N-terminus, the 243-residue chain is GrpE protein homolog, mitochondrial (243 aa).

A disordered region spans residues Thr42–Ala75. Residues Ala44–Glu55 show a composition bias toward basic and acidic residues.

Belongs to the GrpE family. In terms of assembly, component of the PAM complex, at least composed of mtHsp70, MGE1, TIM44, PAM16, PAM17 and PAM18.

The protein localises to the mitochondrion matrix. In terms of biological role, essential component of the PAM complex, a complex required for the translocation of transit peptide-containing proteins from the inner membrane into the mitochondrial matrix in an ATP-dependent manner. Seems to control the nucleotide-dependent binding of SSC1 to substrate proteins. The polypeptide is GrpE protein homolog, mitochondrial (mge1) (Debaryomyces hansenii (strain ATCC 36239 / CBS 767 / BCRC 21394 / JCM 1990 / NBRC 0083 / IGC 2968) (Yeast)).